Here is a 93-residue protein sequence, read N- to C-terminus: Integration host factor subunit beta (93 aa).

This sequence belongs to the bacterial histone-like protein family. In terms of assembly, heterodimer of an alpha and a beta chain.

In terms of biological role, this protein is one of the two subunits of integration host factor, a specific DNA-binding protein that functions in genetic recombination as well as in transcriptional and translational control. This chain is Integration host factor subunit beta, found in Glaesserella parasuis serovar 5 (strain SH0165) (Haemophilus parasuis).